The chain runs to 144 residues: Large ribosomal subunit protein uL15 (144 aa).

The tract at residues 1-48 (MIKLESLQDPSPRKRRTKLLGRGPSSGHGKTSCRGHKGDGSRSGYKRR) is disordered.

This sequence belongs to the universal ribosomal protein uL15 family. In terms of assembly, part of the 50S ribosomal subunit.

Functionally, binds to the 23S rRNA. This is Large ribosomal subunit protein uL15 from Chlamydia caviae (strain ATCC VR-813 / DSM 19441 / 03DC25 / GPIC) (Chlamydophila caviae).